The primary structure comprises 170 residues: NAD(P)H-quinone oxidoreductase subunit I, chloroplastic (170 aa).

4Fe-4S ferredoxin-type domains follow at residues 55–84 (GRIHFEFDKCIACEVCVRACPIDLPVVDWK) and 95–124 (LNYSIDFGICIFCGNCVEYCPTNCLSMTEE). Residues Cys-64, Cys-67, Cys-70, Cys-74, Cys-104, Cys-107, Cys-110, and Cys-114 each coordinate [4Fe-4S] cluster.

Belongs to the complex I 23 kDa subunit family. In terms of assembly, NDH is composed of at least 16 different subunits, 5 of which are encoded in the nucleus. Requires [4Fe-4S] cluster as cofactor.

It is found in the plastid. The protein resides in the chloroplast thylakoid membrane. It catalyses the reaction a plastoquinone + NADH + (n+1) H(+)(in) = a plastoquinol + NAD(+) + n H(+)(out). The enzyme catalyses a plastoquinone + NADPH + (n+1) H(+)(in) = a plastoquinol + NADP(+) + n H(+)(out). Its function is as follows. NDH shuttles electrons from NAD(P)H:plastoquinone, via FMN and iron-sulfur (Fe-S) centers, to quinones in the photosynthetic chain and possibly in a chloroplast respiratory chain. The immediate electron acceptor for the enzyme in this species is believed to be plastoquinone. Couples the redox reaction to proton translocation, and thus conserves the redox energy in a proton gradient. In Spinacia oleracea (Spinach), this protein is NAD(P)H-quinone oxidoreductase subunit I, chloroplastic.